The primary structure comprises 1295 residues: Protein FORGETTER 1 (1295 aa).

3 stretches are compositionally biased toward pro residues: residues 1-14 (MTQS…PLPA), 75-89 (PQQP…PPPI), and 162-177 (PPTP…PPPE). Disordered stretches follow at residues 1–20 (MTQS…HSAA), 68–107 (RPQF…PAHG), 153–204 (LTAS…MDYR), and 626–688 (PEQP…NDSD). Residues 178–193 (EVNEEAIEVEREEDEG) are compositionally biased toward acidic residues. The short motif at 643 to 650 (RKRHSASP) is the Nuclear localization signal element. Over residues 669-688 (DNESDLESEADSADDSNDSD) the composition is skewed to acidic residues. The segment at 691–741 (FQICQICSGEDERKKLLHCSECDKLFHPDCVVPPVIDLPSEAWICFSCKEK) adopts a PHD-type zinc-finger fold.

It belongs to the SBNO family. In terms of assembly, interacts with SWI/SNF and ISWI chromatin remodelers such as BRM, CHR11 and CHR17. Binds to histone H3.

The protein resides in the nucleus. Functionally, required for normal embryo development. Necessary to acquire heat stress (HS) memory, by modulating nucleosome occupancy and regulating heat-induced gene expression. Associates globally with the nucleosome-poor regions flanking the transcription units of expressed genes. Binds to the promoter regions, primarily to the proximal promoter just upstream of the transcriptional start sites (TSS) and somewhat more weakly to the region downstream of the transcription termination site (TTS), of actively expressed genes (e.g. HSA32, HSP18.2 and HSP22.0) in a heat-dependent fashion. This chain is Protein FORGETTER 1, found in Arabidopsis thaliana (Mouse-ear cress).